The following is a 338-amino-acid chain: MSSAGKLPSEVERTLVRKSGAWTNPAYGCPPEKRPIHEYIEKGVVNIDKPRGPTSHEVAAWVKAILGVHTAGHAGSLDPKVTGLLPTLLGKATLAVPALRLSGKEYICHLKLHRAMPQKLVRQVCEEFTGPIYQMPPIKSAVKRVIRVRTIYHLEVLEIEGTSVLFRVGCEAGTYIRKLCHDIGLALGCGGHMQGLRRTKAGPFTEKTLITLHELKDAYVFWKEDGDESELRRVIRPMESAVSHLPKIILRDSAVDAICSGASLAVPGITGLDSNLAEGELTGLFTLKGELVALAKAKMTTEEILKASAGIAASPIRVLMEAGTYPRGWTKKEEKVQL.

The Nucleophile role is filled by Asp78. Residues 245–320 (LPKIILRDSA…IAASPIRVLM (76 aa)) form the PUA domain.

The protein belongs to the pseudouridine synthase TruB family. Type 2 subfamily.

The enzyme catalyses uridine(55) in tRNA = pseudouridine(55) in tRNA. Could be responsible for synthesis of pseudouridine from uracil-55 in the psi GC loop of transfer RNAs. The chain is Probable tRNA pseudouridine synthase B from Methanosarcina mazei (strain ATCC BAA-159 / DSM 3647 / Goe1 / Go1 / JCM 11833 / OCM 88) (Methanosarcina frisia).